The primary structure comprises 100 residues: Defensin-B4 (100 aa).

Residues Met1–Gly22 form the signal peptide. Residues Val23–Pro26 constitute a propeptide that is removed on maturation. 3 cysteine pairs are disulfide-bonded: Cys29-Cys56, Cys36-Cys50, and Cys40-Cys57. A disordered region spans residues Ser60–Glu100. Positions Asp89–Glu100 are enriched in acidic residues.

Belongs to the beta-defensin family. Highly expressed in kidney, lowly expressed in spleen, and expressed at lower levels in lung.

The protein resides in the secreted. Has antimicrobial activity. The chain is Defensin-B4 from Ornithorhynchus anatinus (Duckbill platypus).